The primary structure comprises 333 residues: Adenosine deaminase (333 aa).

Zn(2+)-binding residues include His-12 and His-14. Positions 14, 16, and 170 each coordinate substrate. His-197 is a binding site for Zn(2+). Residue Glu-200 is the Proton donor of the active site. Asp-278 provides a ligand contact to Zn(2+). Position 279 (Asp-279) interacts with substrate.

The protein belongs to the metallo-dependent hydrolases superfamily. Adenosine and AMP deaminases family. Adenosine deaminase subfamily. It depends on Zn(2+) as a cofactor.

The catalysed reaction is adenosine + H2O + H(+) = inosine + NH4(+). It carries out the reaction 2'-deoxyadenosine + H2O + H(+) = 2'-deoxyinosine + NH4(+). Its function is as follows. Catalyzes the hydrolytic deamination of adenosine and 2-deoxyadenosine. This chain is Adenosine deaminase, found in Salmonella enteritidis PT4 (strain P125109).